The following is a 320-amino-acid chain: Protein PR73 (320 aa).

Topologically, residues 1-44 (MPRLQQKWLNSRECPTLRGEAAKGLFPTKDDPSAHKRMSPSDKD) are cytoplasmic. Residues 45-65 (ILILCCKLGIALLCLGLLGEV) traverse the membrane as a helical segment. The Extracellular portion of the chain corresponds to 66–319 (AVRARRALTL…SAKTYGMSYY (254 aa)). N-linked (GlcNAc...) asparagine; by host glycosylation is found at Asn-79, Asn-89, Asn-93, Asn-131, and Asn-146.

This sequence belongs to the mouse mammary tumor virus PR73 superantigen family.

It localises to the membrane. Superantigen. The sequence is that of Protein PR73 from Mouse mammary tumor virus (strain BR6) (MMTV).